A 302-amino-acid polypeptide reads, in one-letter code: Proline dehydrogenase 1 (302 aa).

Residue K95 coordinates substrate. D129 is an active-site residue. Residues M130 and Q158 each contribute to the FAD site. R179 is a catalytic residue. Residues K182–A184 and T221–H222 contribute to the FAD site. R283–R284 is a substrate binding site.

Belongs to the proline oxidase family. The cofactor is FAD.

It carries out the reaction L-proline + a quinone = (S)-1-pyrroline-5-carboxylate + a quinol + H(+). It functions in the pathway amino-acid degradation; L-proline degradation into L-glutamate; L-glutamate from L-proline: step 1/2. Functionally, converts proline to delta-1-pyrroline-5-carboxylate. The protein is Proline dehydrogenase 1 (fadM) of Bacillus subtilis subsp. natto.